The following is a 164-amino-acid chain: UPF0178 protein RPB_3201 (164 aa).

This sequence belongs to the UPF0178 family.

The chain is UPF0178 protein RPB_3201 from Rhodopseudomonas palustris (strain HaA2).